A 415-amino-acid chain; its full sequence is tRNA(Ile2) 2-agmatinylcytidine synthetase TiaS (415 aa).

This sequence belongs to the TiaS family.

The protein localises to the cytoplasm. The catalysed reaction is cytidine(34) in tRNA(Ile2) + agmatine + ATP + H2O = 2-agmatinylcytidine(34) in tRNA(Ile2) + AMP + 2 phosphate + 2 H(+). In terms of biological role, ATP-dependent agmatine transferase that catalyzes the formation of 2-agmatinylcytidine (agm2C) at the wobble position (C34) of tRNA(Ile2), converting the codon specificity from AUG to AUA. The sequence is that of tRNA(Ile2) 2-agmatinylcytidine synthetase TiaS from Pyrobaculum neutrophilum (strain DSM 2338 / JCM 9278 / NBRC 100436 / V24Sta) (Thermoproteus neutrophilus).